A 309-amino-acid chain; its full sequence is DNA-directed RNA polymerase subunit alpha (309 aa).

The tract at residues 1 to 225 (MFQVQCLESA…SLFKLVNSAD (225 aa)) is alpha N-terminal domain (alpha-NTD). The tract at residues 237–309 (IVQVSQTDVT…LHERFNLTLN (73 aa)) is alpha C-terminal domain (alpha-CTD).

The protein belongs to the RNA polymerase alpha chain family. In plastids the minimal PEP RNA polymerase catalytic core is composed of four subunits: alpha, beta, beta', and beta''. When a (nuclear-encoded) sigma factor is associated with the core the holoenzyme is formed, which can initiate transcription.

It is found in the plastid. The protein resides in the chloroplast. It catalyses the reaction RNA(n) + a ribonucleoside 5'-triphosphate = RNA(n+1) + diphosphate. Functionally, DNA-dependent RNA polymerase catalyzes the transcription of DNA into RNA using the four ribonucleoside triphosphates as substrates. This Emiliania huxleyi (Coccolithophore) protein is DNA-directed RNA polymerase subunit alpha.